The chain runs to 487 residues: ATP-dependent rRNA helicase RRP3 (487 aa).

The disordered stretch occupies residues 22 to 67 (IKRKALEKQQQAHANEPSPSDEDSAQSNSKDSNSNEQPEESEEIFE). The Q motif signature appears at 67–95 (ESFTELDLVPELIEACKNLNYNKPTPIQS). The Helicase ATP-binding domain occupies 98–270 (IPPALKGSDI…RASLTNPVKC (173 aa)). 111–118 (AQTGSGKT) contacts ATP. Positions 217–220 (DEAD) match the DEAD box motif. The Helicase C-terminal domain maps to 298 to 442 (LIYLLNEFIG…ENVDKDAILA (145 aa)). Residues 459-487 (NRRNKEKQARGKGRRGRMATRDNMDREER) form a disordered region. The segment covering 477–487 (ATRDNMDREER) has biased composition (basic and acidic residues).

Belongs to the DEAD box helicase family. DDX47/RRP3 subfamily. As to quaternary structure, interacts with the SSU processome.

It is found in the nucleus. The enzyme catalyses ATP + H2O = ADP + phosphate + H(+). Its function is as follows. ATP-dependent rRNA helicase required for pre-ribosomal RNA processing. Involved in the maturation of the 35S-pre-rRNA and to its cleavage to mature 18S rRNA. This chain is ATP-dependent rRNA helicase RRP3, found in Kluyveromyces lactis (strain ATCC 8585 / CBS 2359 / DSM 70799 / NBRC 1267 / NRRL Y-1140 / WM37) (Yeast).